An 83-amino-acid polypeptide reads, in one-letter code: Cytochrome b559 subunit alpha (83 aa).

A helical transmembrane segment spans residues 21–35; the sequence is VIHSITIPSLFIAGW. Heme is bound at residue histidine 23.

The protein belongs to the PsbE/PsbF family. In terms of assembly, heterodimer of an alpha subunit and a beta subunit. PSII is composed of 1 copy each of membrane proteins PsbA, PsbB, PsbC, PsbD, PsbE, PsbF, PsbH, PsbI, PsbJ, PsbK, PsbL, PsbM, PsbT, PsbX, PsbY, PsbZ, Psb30/Ycf12, at least 3 peripheral proteins of the oxygen-evolving complex and a large number of cofactors. It forms dimeric complexes. Heme b is required as a cofactor.

The protein localises to the plastid. The protein resides in the chloroplast thylakoid membrane. Functionally, this b-type cytochrome is tightly associated with the reaction center of photosystem II (PSII). PSII is a light-driven water:plastoquinone oxidoreductase that uses light energy to abstract electrons from H(2)O, generating O(2) and a proton gradient subsequently used for ATP formation. It consists of a core antenna complex that captures photons, and an electron transfer chain that converts photonic excitation into a charge separation. The protein is Cytochrome b559 subunit alpha of Anthoceros angustus (Hornwort).